The following is a 282-amino-acid chain: Exo-glucosaminidase LytG (282 aa).

Residues 1-29 form the signal peptide; the sequence is MARKKLKKRKLLISLFFLVSIPLALFVLA. The region spanning 203–281 is the GW domain; it reads SLKSVDLNAS…DDSAVEIKEA (79 aa).

It belongs to the glycosyl hydrolase 73 family. Mg(2+) serves as cofactor.

Its subcellular location is the secreted. It is found in the cell wall. Inhibited by EDTA. In terms of biological role, is the major glucosaminidase responsible for peptidoglycan structural determination during vegetative growth. Catalyzes the hydrolysis of 1,4-beta-linkages between N-acetyl-D-glucosamine and N-acetylmuramic acid residues in peptidoglycan. Acts processively from the ends of the glycan strands. Also plays a role in motility, chemotaxis and cell division. The sequence is that of Exo-glucosaminidase LytG (lytG) from Bacillus subtilis (strain 168).